Consider the following 299-residue polypeptide: Foldase protein PrsA (299 aa).

The first 19 residues, 1–19, serve as a signal peptide directing secretion; it reads MKKWTIAASLSIGVLALSA. C20 carries N-palmitoyl cysteine lipidation. C20 carries S-diacylglycerol cysteine lipidation. Positions 137 to 227 constitute a PpiC domain; that stretch reads NTEIQAQHIL…HGTHIIKVND (91 aa).

It belongs to the PrsA family.

Its subcellular location is the cell membrane. The enzyme catalyses [protein]-peptidylproline (omega=180) = [protein]-peptidylproline (omega=0). Its function is as follows. Plays a major role in protein secretion by helping the post-translocational extracellular folding of several secreted proteins. The polypeptide is Foldase protein PrsA (Oceanobacillus iheyensis (strain DSM 14371 / CIP 107618 / JCM 11309 / KCTC 3954 / HTE831)).